Here is a 462-residue protein sequence, read N- to C-terminus: Tubby-like F-box protein 7 (462 aa).

In terms of domain architecture, F-box spans 54 to 109; it reads SKWAGLPPELLRDVMKRLEEDDSNWPSRKDVVACASVCTTWRDMCKDIVRNPEFCG. Disordered regions lie at residues 317–338 and 383–418; these read FSEF…DDVN and QPSS…SSSN. Low complexity predominate over residues 383-417; sequence QPSSGAASEPSQAGQAAQQQTQPSQPSSSSSSSSS.

It belongs to the TUB family. As to expression, ubiquitous.

The chain is Tubby-like F-box protein 7 (TULP7) from Oryza sativa subsp. japonica (Rice).